We begin with the raw amino-acid sequence, 438 residues long: Serine hydroxymethyltransferase (438 aa).

(6S)-5,6,7,8-tetrahydrofolate is bound by residues leucine 133 and 137-139 (GHL). Residue lysine 242 is modified to N6-(pyridoxal phosphate)lysine.

This sequence belongs to the SHMT family. Homodimer. It depends on pyridoxal 5'-phosphate as a cofactor.

The protein localises to the cytoplasm. The catalysed reaction is (6R)-5,10-methylene-5,6,7,8-tetrahydrofolate + glycine + H2O = (6S)-5,6,7,8-tetrahydrofolate + L-serine. Its pathway is one-carbon metabolism; tetrahydrofolate interconversion. The protein operates within amino-acid biosynthesis; glycine biosynthesis; glycine from L-serine: step 1/1. In terms of biological role, catalyzes the reversible interconversion of serine and glycine with tetrahydrofolate (THF) serving as the one-carbon carrier. This reaction serves as the major source of one-carbon groups required for the biosynthesis of purines, thymidylate, methionine, and other important biomolecules. Also exhibits THF-independent aldolase activity toward beta-hydroxyamino acids, producing glycine and aldehydes, via a retro-aldol mechanism. The sequence is that of Serine hydroxymethyltransferase from Brucella melitensis biotype 2 (strain ATCC 23457).